A 300-amino-acid chain; its full sequence is Putative hydrolase ML2424 (300 aa).

Aspartate 56 (nucleophile) is an active-site residue. Mg(2+) is bound by residues aspartate 56, aspartate 58, and aspartate 231. Aspartate 58 acts as the Proton donor in catalysis.

This sequence belongs to the HAD-like hydrolase superfamily. SerB family. Mg(2+) serves as cofactor.

This is Putative hydrolase ML2424 from Mycobacterium leprae (strain TN).